The primary structure comprises 106 residues: MASGAPPLTQKTPSHARRKERRRPWAAAFGNHAALAPRALLASEQDRGTERHVVRRALLLIACGVVAVRRTHLEARDAYFGAHACAHLSICVHGDSRKQGEEANRV.

Residues 1 to 23 (MASGAPPLTQKTPSHARRKERRR) form a disordered region. Over residues 14-23 (SHARRKERRR) the composition is skewed to basic residues.

This is an uncharacterized protein from Treponema pallidum (strain Nichols).